Reading from the N-terminus, the 377-residue chain is MAEKIRVGLFFGGNSSEHDVSKRSAKNYYDALDPEKYQIFPVLISKKGIMIDSETSKRVLFGEDEDELLAGLPNKNADIFGPIDSIRNLKLDVLFPSVHGNLGEDGTLAGLFRLMNIPYVGSGLRAHAISFDKVITKELMTVNGIRNTKYIVIFQNDKNKPDWDSVSKQLGEVVFVKAANQGSSVGVSRVTNAEEYENALRDSFQYDEKLLVEKAVESPTELEIGLLGNDRVITSPIGAHWAPGQDHGSGWFDYKNKFVDNSKMKYQIPAKISPAKSKELENMAVKAYKVLGIKGFARIDFLMSKDGEIFLSEPNTLPGNTNMSLFPILFEAAGMNRSQQAEKLIQLAFEEFKREQNISYSFKELGSEKLGQFDIKK.

The 210-residue stretch at 137-346 (KELMTVNGIR…RSQQAEKLIQ (210 aa)) folds into the ATP-grasp domain. An ATP-binding site is contributed by 167-222 (SKQLGEVVFVKAANQGSSVGVSRVTNAEEYENALRDSFQYDEKLLVEKAVESPTEL). 3 residues coordinate Mg(2+): Asp300, Glu313, and Asn315.

This sequence belongs to the D-alanine--D-alanine ligase family. Mg(2+) serves as cofactor. Mn(2+) is required as a cofactor.

It is found in the cytoplasm. It carries out the reaction 2 D-alanine + ATP = D-alanyl-D-alanine + ADP + phosphate + H(+). Its pathway is cell wall biogenesis; peptidoglycan biosynthesis. Its function is as follows. Cell wall formation. This Oenococcus oeni (strain ATCC BAA-331 / PSU-1) protein is D-alanine--D-alanine ligase.